The sequence spans 284 residues: 4-diphosphocytidyl-2-C-methyl-D-erythritol kinase (284 aa).

K14 is a catalytic residue. 98 to 108 (PMGGGLGGGSS) contacts ATP. D140 is an active-site residue.

The protein belongs to the GHMP kinase family. IspE subfamily.

The catalysed reaction is 4-CDP-2-C-methyl-D-erythritol + ATP = 4-CDP-2-C-methyl-D-erythritol 2-phosphate + ADP + H(+). It participates in isoprenoid biosynthesis; isopentenyl diphosphate biosynthesis via DXP pathway; isopentenyl diphosphate from 1-deoxy-D-xylulose 5-phosphate: step 3/6. Its function is as follows. Catalyzes the phosphorylation of the position 2 hydroxy group of 4-diphosphocytidyl-2C-methyl-D-erythritol. This Shewanella pealeana (strain ATCC 700345 / ANG-SQ1) protein is 4-diphosphocytidyl-2-C-methyl-D-erythritol kinase.